Reading from the N-terminus, the 312-residue chain is ADP-L-glycero-D-manno-heptose-6-epimerase (312 aa).

NADP(+) contacts are provided by residues 10–11 (FI), 31–32 (DN), K38, K53, 75–79 (EGACS), and N92. Y140 functions as the Proton acceptor in the catalytic mechanism. An NADP(+)-binding site is contributed by K144. Residue N169 participates in substrate binding. Residues V170 and K178 each coordinate NADP(+). K178 functions as the Proton acceptor in the catalytic mechanism. Substrate is bound by residues S180, H187, 201 to 204 (FEGS), R209, and Y274.

The protein belongs to the NAD(P)-dependent epimerase/dehydratase family. HldD subfamily. Homopentamer. Requires NADP(+) as cofactor.

The enzyme catalyses ADP-D-glycero-beta-D-manno-heptose = ADP-L-glycero-beta-D-manno-heptose. It participates in nucleotide-sugar biosynthesis; ADP-L-glycero-beta-D-manno-heptose biosynthesis; ADP-L-glycero-beta-D-manno-heptose from D-glycero-beta-D-manno-heptose 7-phosphate: step 4/4. Its function is as follows. Catalyzes the interconversion between ADP-D-glycero-beta-D-manno-heptose and ADP-L-glycero-beta-D-manno-heptose via an epimerization at carbon 6 of the heptose. The sequence is that of ADP-L-glycero-D-manno-heptose-6-epimerase from Proteus mirabilis (strain HI4320).